Consider the following 95-residue polypeptide: Large ribosomal subunit protein uL23 (95 aa).

It belongs to the universal ribosomal protein uL23 family. Part of the 50S ribosomal subunit. Contacts protein L29, and trigger factor when it is bound to the ribosome.

Functionally, one of the early assembly proteins it binds 23S rRNA. One of the proteins that surrounds the polypeptide exit tunnel on the outside of the ribosome. Forms the main docking site for trigger factor binding to the ribosome. This Lawsonia intracellularis (strain PHE/MN1-00) protein is Large ribosomal subunit protein uL23.